The following is a 498-amino-acid chain: ATP synthase subunit beta, chloroplastic (498 aa).

Position 172-179 (172-179 (GGAGVGKT)) interacts with ATP.

It belongs to the ATPase alpha/beta chains family. F-type ATPases have 2 components, CF(1) - the catalytic core - and CF(0) - the membrane proton channel. CF(1) has five subunits: alpha(3), beta(3), gamma(1), delta(1), epsilon(1). CF(0) has four main subunits: a(1), b(1), b'(1) and c(9-12).

It localises to the plastid. The protein resides in the chloroplast thylakoid membrane. It carries out the reaction ATP + H2O + 4 H(+)(in) = ADP + phosphate + 5 H(+)(out). Produces ATP from ADP in the presence of a proton gradient across the membrane. The catalytic sites are hosted primarily by the beta subunits. The polypeptide is ATP synthase subunit beta, chloroplastic (Vitis vinifera (Grape)).